Consider the following 485-residue polypeptide: Glycogen synthase (485 aa).

Residue K15 participates in ADP-alpha-D-glucose binding.

This sequence belongs to the glycosyltransferase 1 family. Bacterial/plant glycogen synthase subfamily.

It carries out the reaction [(1-&gt;4)-alpha-D-glucosyl](n) + ADP-alpha-D-glucose = [(1-&gt;4)-alpha-D-glucosyl](n+1) + ADP + H(+). Its pathway is glycan biosynthesis; glycogen biosynthesis. In terms of biological role, synthesizes alpha-1,4-glucan chains using ADP-glucose. The protein is Glycogen synthase of Francisella philomiragia subsp. philomiragia (strain ATCC 25017 / CCUG 19701 / FSC 153 / O#319-036).